The following is a 247-amino-acid chain: Probable transcriptional regulatory protein Asuc_1803 (247 aa).

Belongs to the TACO1 family.

Its subcellular location is the cytoplasm. The polypeptide is Probable transcriptional regulatory protein Asuc_1803 (Actinobacillus succinogenes (strain ATCC 55618 / DSM 22257 / CCUG 43843 / 130Z)).